Here is a 162-residue protein sequence, read N- to C-terminus: SsrA-binding protein (162 aa).

Positions 137–154 are enriched in basic and acidic residues; the sequence is HDKREDTKAREWDREKAR. The tract at residues 137 to 162 is disordered; that stretch reads HDKREDTKAREWDREKARIMKNKHRG.

This sequence belongs to the SmpB family.

The protein localises to the cytoplasm. Its function is as follows. Required for rescue of stalled ribosomes mediated by trans-translation. Binds to transfer-messenger RNA (tmRNA), required for stable association of tmRNA with ribosomes. tmRNA and SmpB together mimic tRNA shape, replacing the anticodon stem-loop with SmpB. tmRNA is encoded by the ssrA gene; the 2 termini fold to resemble tRNA(Ala) and it encodes a 'tag peptide', a short internal open reading frame. During trans-translation Ala-aminoacylated tmRNA acts like a tRNA, entering the A-site of stalled ribosomes, displacing the stalled mRNA. The ribosome then switches to translate the ORF on the tmRNA; the nascent peptide is terminated with the 'tag peptide' encoded by the tmRNA and targeted for degradation. The ribosome is freed to recommence translation, which seems to be the essential function of trans-translation. The protein is SsrA-binding protein of Aeromonas hydrophila subsp. hydrophila (strain ATCC 7966 / DSM 30187 / BCRC 13018 / CCUG 14551 / JCM 1027 / KCTC 2358 / NCIMB 9240 / NCTC 8049).